Consider the following 291-residue polypeptide: uncharacterized protein (291 aa).

Belongs to the pseudouridine synthase RluA family.

It carries out the reaction a uridine in RNA = a pseudouridine in RNA. This is an uncharacterized protein from Synechocystis sp. (strain ATCC 27184 / PCC 6803 / Kazusa).